A 69-amino-acid polypeptide reads, in one-letter code: Small, acid-soluble spore protein A (69 aa).

This sequence belongs to the alpha/beta-type SASP family.

Its function is as follows. SASP are bound to spore DNA. They are double-stranded DNA-binding proteins that cause DNA to change to an a-like conformation. They protect the DNA backbone from chemical and enzymatic cleavage and are thus involved in dormant spore's high resistance to UV light. This Bacillus subtilis (strain 168) protein is Small, acid-soluble spore protein A (sspA).